The sequence spans 813 residues: Palmitoyltransferase AKR1 (813 aa).

The segment at 1 to 83 (MAKKKSKSKS…PVTTSNETDP (83 aa)) is disordered. Residues 1–387 (MAKKKSKSKS…KPWVSAKLGK (387 aa)) are Cytoplasmic-facing. The span at 9 to 24 (KSSSPKPKVSSTAAKP) shows a compositional bias: low complexity. Over residues 28–46 (DNQQNIENVQDSPSALQQQ) the composition is skewed to polar residues. Residues 47 to 78 (SATAEESENTATTATPSEGTTATTESSPVTTS) are compositionally biased toward low complexity. 6 ANK repeats span residues 133–162 (PTLA…VLVN), 167–196 (DEIT…NPNQ), 201–231 (LKAS…DPNL), 235–264 (QTYN…STDS), 276–305 (SNRT…DVSK), and 309–338 (SLFI…DIYF). Residues 388–408 (IITFLTPYFLLPLSFNVLSMG) traverse the membrane as a helical segment. At 409–412 (GDQG) the chain is on the lumenal side. Residues 413–433 (GFIIPKLILAIGILGGGIYLL) form a helical membrane-spanning segment. Residues 434–452 (NKLIISQYIFDDKKLAKSP) are Cytoplasmic-facing. The chain crosses the membrane as a helical span at residues 453–473 (ILAGVFSATAFWSVLVWLYNI). Topologically, residues 474 to 485 (LPTTFIHNFFAN) are lumenal. The helical transmembrane segment at 486–506 (VIMAILIAIFTWSFFKAMFIN) threads the bilayer. Topologically, residues 507 to 579 (PGFVPTPADN…YNDIGVRNHK (73 aa)) are cytoplasmic. A DHHC domain is found at 536 to 586 (HFCVNSFVRKPLRSRYSKHNKRLIARFDHSCPWVYNDIGVRNHKIFITFVY). The active-site S-palmitoyl cysteine intermediate is the C566. The helical transmembrane segment at 580-600 (IFITFVYSLNMAIFVFLYLSL) threads the bilayer. At 601-642 (QYFDKVKDQYDSDDEGEGEGFVCSILGDDMCYGYKNHHFHFN) the chain is on the lumenal side. Residues 643-663 (VFMWDLFQCVWVSFLCIVQTF) traverse the membrane as a helical segment. At 664-813 (QILKGLTTWE…VDYYTLYSYH (150 aa)) the chain is on the cytoplasmic side.

This sequence belongs to the DHHC palmitoyltransferase family. AKR/ZDHHC17 subfamily.

The protein localises to the early endosome membrane. The protein resides in the golgi apparatus membrane. The catalysed reaction is L-cysteinyl-[protein] + hexadecanoyl-CoA = S-hexadecanoyl-L-cysteinyl-[protein] + CoA. Its function is as follows. Palmitoyltransferase specific for casein kinase 1. The chain is Palmitoyltransferase AKR1 (AKR1) from Candida albicans (strain SC5314 / ATCC MYA-2876) (Yeast).